The following is a 301-amino-acid chain: 2-aminobenzoylacetyl-CoA thioesterase (301 aa).

Residues His69, His71, Asp73, His74, His159, Asp178, and His221 each contribute to the Fe cation site.

This sequence belongs to the metallo-beta-lactamase superfamily.

It carries out the reaction (2-aminobenzoyl)acetyl-CoA + H2O = (2-aminobenzoyl)acetate + CoA + H(+). Its activity is regulated as follows. Thioesterase activity, but not pyocyanine production, is inhibited by 2-(pyridin-3-yl)benzoic acid, 2-(1H-pyrrol-1-yl)benzoic acid and 3-methylthiophene-2-carboxylic acid. Compounds bind to the active center. In terms of biological role, required for the biosynthesis of the quorum-sensing signaling molecules 2-heptyl-4(1H)-quinolone (HHQ) and 2-heptyl-3-hydroxy-4(1H)-quinolone (Pseudomonas quinolone signal or PQS), which are important for biofilm formation and virulence. Catalyzes the hydrolysis of the intermediate 2-aminobenzoylacetyl-CoA (2-ABA-CoA) to form 2-aminobenzoylacetate (2-ABA), the precursor of HHQ. In vitro, can also hydrolyze other substrates such as S-ethyl-acetothioacetate and acetoacetyl-CoA, but is inactive against anthraniloyl-CoA, malonyl-CoA and octanoyl-CoA. Beyond its thioesterase function, is involved in the regulation of diverse genes coding for key virulence determinants and biofilm development. This chain is 2-aminobenzoylacetyl-CoA thioesterase, found in Pseudomonas aeruginosa (strain ATCC 15692 / DSM 22644 / CIP 104116 / JCM 14847 / LMG 12228 / 1C / PRS 101 / PAO1).